Here is a 3432-residue protein sequence, read N- to C-terminus: Hybrid signal transduction histidine kinase G (3432 aa).

Low complexity-rich tracts occupy residues 44-68 (HFSN…TTTN), 76-90 (SQLQ…QQNN), and 126-145 (QPQQ…SQKQ). 2 disordered regions span residues 44-109 (HFSN…TNSS) and 124-240 (DDQP…HNIN). A compositionally biased stretch (polar residues) spans 146–157 (TSQLNISGNNSG). Composition is skewed to low complexity over residues 165–177 (TISN…NFIH) and 187–238 (KTPI…NNHN). Positions 263–792 (LSFKHGYNSG…YGLKKDLEMF (530 aa)) constitute a Protein kinase domain. Residues 269–277 (YNSGLGGNF) and K305 contribute to the ATP site. The segment covering 399–419 (NNNNNNNNSYNNNYNNNNNNN) has biased composition (low complexity). 2 disordered regions span residues 399–426 (NNNN…TSPI) and 443–542 (FQLN…STPL). Residues 443–467 (FQLNSSTNSTGSPLIITSQPMPFQL) are compositionally biased toward polar residues. Residues 468 to 479 (NSNSNTTASSSS) are compositionally biased toward low complexity. The span at 480–490 (PITHSNLNTAI) shows a compositional bias: polar residues. The span at 491 to 508 (TSTTTSNSNSNNNSNNNN) shows a compositional bias: low complexity. The span at 509–525 (SGGGGGGGGGGGGGGGT) shows a compositional bias: gly residues. D585 serves as the catalytic Proton acceptor; for protein kinase activity. The AAA stretch occupies residues 863-1121 (GKEFIIVSGL…TMKIVLKNLD (259 aa)). 871–878 (GLSGVGKT) contributes to the ATP binding site. Disordered regions lie at residues 1040 to 1077 (NNFS…NNNI) and 1261 to 1290 (TTTT…NNSD). A compositionally biased stretch (low complexity) spans 1261–1288 (TTTTNNNTTNNTNNNNTNNNNNNTNGNN). The next 2 helical transmembrane spans lie at 1567–1587 (VMVI…TLLL) and 1599–1619 (ISSW…IGHF). One copy of the TPR repeat lies at 1965-1998 (SQLMLAKAEFERINGNFEQAMEYFSEAISLAQQF). Disordered regions lie at residues 2071–2095 (EYSN…QASI) and 2299–2349 (GYNN…NNNK). Residues 2073–2095 (SNNNNNNNSNNNNNNANQSQASI) show a composition bias toward low complexity. Residues 2215 to 2465 (YFDRLLKRLM…SNARLFIKVN (251 aa)) enclose the GAF domain. In terms of domain architecture, Histidine kinase spans 2491-2769 (NMSHEMRTPL…TFHFCVELGK (279 aa)). The residue at position 2494 (H2494) is a Phosphohistidine; by autocatalysis. The span at 2637–2648 (TTTNNKKQLNTD) shows a compositional bias: low complexity. Disordered regions lie at residues 2637–2673 (TTTN…SIDL), 2785–2815 (LLNN…NNNN), 2917–3030 (LSPK…NNNS), 3134–3160 (NNNI…HSQY), and 3247–3281 (NSIS…TITT). Over residues 2649–2673 (NDGDDDDDDDNENLDENNEDTSIDL) the composition is skewed to acidic residues. 3 stretches are compositionally biased toward low complexity: residues 2787 to 2815 (NNNN…NNNN), 2935 to 3029 (LSSS…HNNN), and 3134 to 3145 (NNNINNINNNNN). Residues 3305–3424 (KILIVEDNEM…DLRYVINRYG (120 aa)) enclose the Response regulatory domain. D3356 is modified (4-aspartylphosphate).

The protein belongs to the protein kinase superfamily. Ser/Thr protein kinase family. Activation probably requires transfer of a phosphate group between a histidine in the kinase core (transmitter) domain and an aspartate of the receiver domain.

Its subcellular location is the membrane. The enzyme catalyses ATP + protein L-histidine = ADP + protein N-phospho-L-histidine.. It carries out the reaction L-seryl-[protein] + ATP = O-phospho-L-seryl-[protein] + ADP + H(+). The catalysed reaction is L-threonyl-[protein] + ATP = O-phospho-L-threonyl-[protein] + ADP + H(+). Acts as a receptor histidine kinase for a signal transduction pathway. This protein undergoes an ATP-dependent autophosphorylation at a conserved histidine residue in the kinase core, and a phosphoryl group is then transferred to a conserved aspartate residue in the receiver domain. In Dictyostelium discoideum (Social amoeba), this protein is Hybrid signal transduction histidine kinase G (dhkG).